The sequence spans 295 residues: ATP synthase gamma chain (295 aa).

Belongs to the ATPase gamma chain family. In terms of assembly, F-type ATPases have 2 components, CF(1) - the catalytic core - and CF(0) - the membrane proton channel. CF(1) has five subunits: alpha(3), beta(3), gamma(1), delta(1), epsilon(1). CF(0) has three main subunits: a, b and c.

The protein localises to the cell inner membrane. In terms of biological role, produces ATP from ADP in the presence of a proton gradient across the membrane. The gamma chain is believed to be important in regulating ATPase activity and the flow of protons through the CF(0) complex. In Sulfurimonas denitrificans (strain ATCC 33889 / DSM 1251) (Thiomicrospira denitrificans (strain ATCC 33889 / DSM 1251)), this protein is ATP synthase gamma chain.